A 489-amino-acid polypeptide reads, in one-letter code: Neuropeptide CCHamide-2 receptor (489 aa).

Residues 1 to 74 lie on the Extracellular side of the membrane; that stretch reads MYASLMDVGQ…DRPETYIVTV (74 aa). 2 N-linked (GlcNAc...) asparagine glycosylation sites follow: Asn-25 and Asn-50. A helical membrane pass occupies residues 75 to 95; the sequence is LYTLIFIVGVLGNGTLVIIFF. Over 96 to 107 the chain is Cytoplasmic; sequence RHRSMRNIPNTY. The helical transmembrane segment at 108-128 threads the bilayer; that stretch reads ILSLALADLLVILVCVPVATI. Residues 129–143 are Extracellular-facing; sequence VYTQESWPFERNMCR. A disulfide bond links Cys-142 and Cys-225. Residues 144–164 traverse the membrane as a helical segment; it reads ISEFFKDISIGVSVFTLTALS. At 165–184 the chain is on the cytoplasmic side; sequence GERYCAIVNPLRKLQTKPLT. The helical transmembrane segment at 185–205 threads the bilayer; it reads VFTAVMIWILAILLGMPSVLF. Topologically, residues 206 to 235 are extracellular; sequence SDIKSYPVFTATGNMTIEVCSPFRDPEYAK. The N-linked (GlcNAc...) asparagine glycan is linked to Asn-219. A helical transmembrane segment spans residues 236–256; it reads FMVAGKALVYYLLPLSIIGAL. Residues 257-293 lie on the Cytoplasmic side of the membrane; it reads YIMMAKRLHMSARNMPGEQQSMQSRTQARARLHVARM. A helical membrane pass occupies residues 294–314; that stretch reads VVAFVVVFFICFFPYHVFELW. Residues 315–333 lie on the Extracellular side of the membrane; sequence YHFYPTAEEDFDEFWNVLR. The chain crosses the membrane as a helical span at residues 334–354; sequence IVGFCTSFLNSCVNPVALYCV. At 355–489 the chain is on the cytoplasmic side; it reads SGVFRQHFNR…NRYESGVMRY (135 aa). A disordered region spans residues 438-468; sequence SFHRQDSMPLQHGNAHGGGAGGGSSGLGAGG. The segment covering 452–468 has biased composition (gly residues); it reads AHGGGAGGGSSGLGAGG.

The protein belongs to the G-protein coupled receptor 1 family. In terms of tissue distribution, highly expressed in larval brain. Also highly expressed in adult brain with very low levels in larval and adult gut.

The protein resides in the cell membrane. Receptor for the neuropeptide CCHamide-2. The protein is Neuropeptide CCHamide-2 receptor of Drosophila melanogaster (Fruit fly).